Here is a 273-residue protein sequence, read N- to C-terminus: DnaJ homolog subfamily C member 27 (273 aa).

The segment at Met1–Lys18 is required for interaction with MAPK1. Residues Gly23–Ser30, Asp71–His75, and Asn134–Asp137 contribute to the GTP site. The J domain maps to Asp217–Lys273.

The protein belongs to the small GTPase superfamily. Rab family. Interacts directly with MAPK1 (wild-type and kinase-deficient forms). Interacts directly (in GTP-bound form) with MAP2K1 (wild-type and kinase-deficient forms).

It is found in the nucleus. In terms of biological role, GTPase which can activate the MEK/ERK pathway and induce cell transformation when overexpressed. May act as a nuclear scaffold for MAPK1, probably by association with MAPK1 nuclear export signal leading to enhanced ERK1/ERK2 signaling. The protein is DnaJ homolog subfamily C member 27 (Dnajc27) of Mus musculus (Mouse).